The chain runs to 179 residues: Large ribosomal subunit protein uL5 (179 aa).

This sequence belongs to the universal ribosomal protein uL5 family. Part of the 50S ribosomal subunit; part of the 5S rRNA/L5/L18/L25 subcomplex. Contacts the 5S rRNA and the P site tRNA. Forms a bridge to the 30S subunit in the 70S ribosome.

This is one of the proteins that bind and probably mediate the attachment of the 5S RNA into the large ribosomal subunit, where it forms part of the central protuberance. In the 70S ribosome it contacts protein S13 of the 30S subunit (bridge B1b), connecting the 2 subunits; this bridge is implicated in subunit movement. Contacts the P site tRNA; the 5S rRNA and some of its associated proteins might help stabilize positioning of ribosome-bound tRNAs. The polypeptide is Large ribosomal subunit protein uL5 (Geobacter sulfurreducens (strain ATCC 51573 / DSM 12127 / PCA)).